A 432-amino-acid chain; its full sequence is Protein prenyltransferase alpha subunit repeat-containing protein 1-A (432 aa).

PFTA repeat units lie at residues E86–P119, K121–L154, E179–K212, D218–T251, E294–L327, and S395–H432.

Belongs to the protein prenyltransferase subunit alpha family.

This Xenopus laevis (African clawed frog) protein is Protein prenyltransferase alpha subunit repeat-containing protein 1-A (ptar1-a).